The sequence spans 208 residues: Small ribosomal subunit protein uS4 (208 aa).

Residues 30–51 (KSSLEKRPYAPGQHGQRRSKIS) are disordered. The region spanning 98–161 (RRLDNVVYRM…KNNPQVQRSI (64 aa)) is the S4 RNA-binding domain.

It belongs to the universal ribosomal protein uS4 family. Part of the 30S ribosomal subunit. Contacts protein S5. The interaction surface between S4 and S5 is involved in control of translational fidelity.

Its function is as follows. One of the primary rRNA binding proteins, it binds directly to 16S rRNA where it nucleates assembly of the body of the 30S subunit. With S5 and S12 plays an important role in translational accuracy. In Wolinella succinogenes (strain ATCC 29543 / DSM 1740 / CCUG 13145 / JCM 31913 / LMG 7466 / NCTC 11488 / FDC 602W) (Vibrio succinogenes), this protein is Small ribosomal subunit protein uS4.